Reading from the N-terminus, the 290-residue chain is Signal peptidase I (290 aa).

The Cytoplasmic portion of the chain corresponds to 1–13; the sequence is MKFLRSVYAFCSS. Residues 14 to 34 form a helical membrane-spanning segment; it reads WVGTIVIVLLVIFFIAQAFII. Residues 35–290 lie on the Extracellular side of the membrane; that stretch reads PSRSMVGTLY…KIIKKENATH (256 aa). Catalysis depends on residues Ser-38 and Lys-106.

Belongs to the peptidase S26 family.

The protein resides in the cell membrane. The catalysed reaction is Cleavage of hydrophobic, N-terminal signal or leader sequences from secreted and periplasmic proteins.. This is Signal peptidase I (lepB) from Helicobacter pylori (strain ATCC 700392 / 26695) (Campylobacter pylori).